Consider the following 942-residue polypeptide: Chitin synthase 2 (942 aa).

Residues 1 to 13 are compositionally biased toward basic and acidic residues; sequence MAYHYSHDSDRRQ. The interval 1 to 132 is disordered; the sequence is MAYHYSHDSD…PSHTDYSDED (132 aa). Residues 18-33 are compositionally biased toward low complexity; sequence YNYPSNYSNPSQYSIP. N-linked (GlcNAc...) asparagine glycosylation is present at Asn23. A compositionally biased stretch (polar residues) spans 71 to 80; sequence PQPTASSMTS. Asn587 is a glycosylation site (N-linked (GlcNAc...) asparagine). Helical transmembrane passes span 590–610, 625–645, 663–683, and 696–716; these read IFAATYAMVCFWRIWTSGHGI, FNLLFNWLSVSSFYLAFFFLI, IFQVFNKVYIALIFVVLVCSL, and FCIFMFAVCQGILLYCAGWTV. An N-linked (GlcNAc...) asparagine glycan is attached at Asn736. The next 2 membrane-spanning stretches (helical) occupy residues 739-759 and 770-790; these read FVQLALSLMATYGLYLISSLL and FVQYLLLLPSYVNILLIYAMC. Residue Asn803 is glycosylated (N-linked (GlcNAc...) asparagine). The next 2 helical transmembrane spans lie at 873–893 and 916–936; these read VVLLFLGSNMLIILLFTSSTF and IFYAVLGLSALRFAGCLLYLI.

The protein belongs to the chitin synthase family. Class III subfamily.

It localises to the cell membrane. The enzyme catalyses [(1-&gt;4)-N-acetyl-beta-D-glucosaminyl](n) + UDP-N-acetyl-alpha-D-glucosamine = [(1-&gt;4)-N-acetyl-beta-D-glucosaminyl](n+1) + UDP + H(+). Functionally, polymerizes chitin, a structural polymer of the cell wall and septum, by transferring the sugar moiety of UDP-GlcNAc to the non-reducing end of the growing chitin polymer. The protein is Chitin synthase 2 of Cryptococcus neoformans var. grubii serotype A (strain H99 / ATCC 208821 / CBS 10515 / FGSC 9487) (Filobasidiella neoformans var. grubii).